The chain runs to 447 residues: UDP-N-acetylmuramoylalanine--D-glutamate ligase (447 aa).

112–118 (GTNGKST) is an ATP binding site.

Belongs to the MurCDEF family.

It localises to the cytoplasm. The enzyme catalyses UDP-N-acetyl-alpha-D-muramoyl-L-alanine + D-glutamate + ATP = UDP-N-acetyl-alpha-D-muramoyl-L-alanyl-D-glutamate + ADP + phosphate + H(+). It functions in the pathway cell wall biogenesis; peptidoglycan biosynthesis. In terms of biological role, cell wall formation. Catalyzes the addition of glutamate to the nucleotide precursor UDP-N-acetylmuramoyl-L-alanine (UMA). The chain is UDP-N-acetylmuramoylalanine--D-glutamate ligase from Legionella pneumophila subsp. pneumophila (strain Philadelphia 1 / ATCC 33152 / DSM 7513).